A 178-amino-acid chain; its full sequence is Small ribosomal subunit protein uS5 (178 aa).

An S5 DRBM domain is found at 15–78; that stretch reads FEEKIIEIRR…SAAKRNIIEV (64 aa).

It belongs to the universal ribosomal protein uS5 family. Part of the 30S ribosomal subunit. Contacts proteins S4 and S8.

With S4 and S12 plays an important role in translational accuracy. Its function is as follows. Located at the back of the 30S subunit body where it stabilizes the conformation of the head with respect to the body. This is Small ribosomal subunit protein uS5 from Thermotoga sp. (strain RQ2).